Here is a 347-residue protein sequence, read N- to C-terminus: Ornithine transcarbamylase, mitochondrial (347 aa).

The N-terminal 25 residues, 1–25, are a transit peptide targeting the mitochondrion; that stretch reads MINSISNTVLLKSVVSKRFFSSSAK. Carbamoyl phosphate-binding positions include 84 to 87, Arg135, His162, and Gln165; that span reads STRT. L-ornithine is bound by residues Asn194, Asp258, Ser262, and Met263. Cys300 functions as the Proton acceptor in the catalytic mechanism. Residues 300-301 and Arg328 contribute to the carbamoyl phosphate site; that span reads CL.

Belongs to the aspartate/ornithine carbamoyltransferase superfamily. OTCase family.

Its subcellular location is the mitochondrion matrix. The enzyme catalyses carbamoyl phosphate + L-ornithine = L-citrulline + phosphate + H(+). It participates in amino-acid biosynthesis; L-arginine biosynthesis; L-arginine from L-ornithine and carbamoyl phosphate: step 1/3. The polypeptide is Ornithine transcarbamylase, mitochondrial (OTC) (Pachysolen tannophilus (Yeast)).